Reading from the N-terminus, the 453-residue chain is Cytochrome b-c1 complex subunit 2, mitochondrial (453 aa).

The transit peptide at 1–14 (MKLLTRAGSLSRFY) directs the protein to the mitochondrion. Residues K66, K199, and K250 each carry the N6-acetyllysine modification.

The protein belongs to the peptidase M16 family. UQCRC2/QCR2 subfamily. As to quaternary structure, component of the ubiquinol-cytochrome c oxidoreductase (cytochrome b-c1 complex, complex III, CIII), a multisubunit enzyme composed of 11 subunits. The complex is composed of 3 respiratory subunits cytochrome b, cytochrome c1 and Rieske protein UQCRFS1, 2 core protein subunits UQCRC1/QCR1 and UQCRC2/QCR2, and 6 low-molecular weight protein subunits UQCRH/QCR6, UQCRB/QCR7, UQCRQ/QCR8, UQCR10/QCR9, UQCR11/QCR10 and subunit 9, the cleavage product of Rieske protein UQCRFS1. The complex exists as an obligatory dimer and forms supercomplexes (SCs) in the inner mitochondrial membrane with NADH-ubiquinone oxidoreductase (complex I, CI) and cytochrome c oxidase (complex IV, CIV), resulting in different assemblies (supercomplex SCI(1)III(2)IV(1) and megacomplex MCI(2)III(2)IV(2)). Interacts with RAB5IF. Interacts with STMP1.

Its subcellular location is the mitochondrion inner membrane. In terms of biological role, component of the ubiquinol-cytochrome c oxidoreductase, a multisubunit transmembrane complex that is part of the mitochondrial electron transport chain which drives oxidative phosphorylation. The respiratory chain contains 3 multisubunit complexes succinate dehydrogenase (complex II, CII), ubiquinol-cytochrome c oxidoreductase (cytochrome b-c1 complex, complex III, CIII) and cytochrome c oxidase (complex IV, CIV), that cooperate to transfer electrons derived from NADH and succinate to molecular oxygen, creating an electrochemical gradient over the inner membrane that drives transmembrane transport and the ATP synthase. The cytochrome b-c1 complex catalyzes electron transfer from ubiquinol to cytochrome c, linking this redox reaction to translocation of protons across the mitochondrial inner membrane, with protons being carried across the membrane as hydrogens on the quinol. In the process called Q cycle, 2 protons are consumed from the matrix, 4 protons are released into the intermembrane space and 2 electrons are passed to cytochrome c. The 2 core subunits UQCRC1/QCR1 and UQCRC2/QCR2 are homologous to the 2 mitochondrial-processing peptidase (MPP) subunits beta-MPP and alpha-MPP respectively, and they seem to have preserved their MPP processing properties. May be involved in the in situ processing of UQCRFS1 into the mature Rieske protein and its mitochondrial targeting sequence (MTS)/subunit 9 when incorporated into complex III. This Bos taurus (Bovine) protein is Cytochrome b-c1 complex subunit 2, mitochondrial (UQCRC2).